The following is a 214-amino-acid chain: Ubiquitin-conjugating enzyme E2 21 (214 aa).

The region spanning A21 to N168 is the UBC core domain. The active-site Glycyl thioester intermediate is the C106. Residues D172–D214 form the UBA domain.

This sequence belongs to the ubiquitin-conjugating enzyme family.

The enzyme catalyses S-ubiquitinyl-[E1 ubiquitin-activating enzyme]-L-cysteine + [E2 ubiquitin-conjugating enzyme]-L-cysteine = [E1 ubiquitin-activating enzyme]-L-cysteine + S-ubiquitinyl-[E2 ubiquitin-conjugating enzyme]-L-cysteine.. The protein operates within protein modification; protein ubiquitination. Its function is as follows. Acts with E3 ubiquitin-protein ligase trim-21 to catalyze the 'Lys-48'-linked polyubiquitination of ced-1, promoting its proteasomal degradation to maintain appropriate ced-1 levels for apoptotic cell clearance. In Caenorhabditis elegans, this protein is Ubiquitin-conjugating enzyme E2 21 (ubc-21).